We begin with the raw amino-acid sequence, 612 residues long: Cryptochrome-2 (612 aa).

Residues 1–485 are CNT2, binds chromophores to sense blue light and mediate CRY dimerization; it reads MKMDKKTIVW…TARELLAKAI (485 aa). The 130-residue stretch at 5 to 134 folds into the Photolyase/cryptochrome alpha/beta domain; sequence KKTIVWFRRD…SVQSYNGDLL (130 aa). FAD is bound at residue Y232. Residues N235 and S243 each coordinate Mg(2+). Residue 244–248 participates in FAD binding; that stretch reads TSLLS. H355 lines the Mg(2+) pocket. Residues N356 and 387 to 389 each bind FAD; that span reads DAD. 356–357 contributes to the ATP binding site; the sequence is NR. D406 lines the ATP pocket. Residues 486-612 form a CCT2/CCE2, mediates blue light signaling region; that stretch reads SRTREAQIMI…TTSLGKNGCK (127 aa). The segment at 539–576 is disordered; it reads GSKRVKPEEEEERDMKKSRGFDERELFSTAESSSSSSV. The short motif at 541-555 is the Nuclear localization signal element; the sequence is KRVKPEEEEERDMKK. A compositionally biased stretch (basic and acidic residues) spans 551–564; sequence RDMKKSRGFDEREL. S587 bears the Phosphoserine; by CK1 mark. The interval 590–612 is disordered; the sequence is KNLEGIQDSSDQITTSLGKNGCK. Residues 596–612 show a composition bias toward polar residues; the sequence is QDSSDQITTSLGKNGCK. A phosphoserine mark is found at S598 and S599. T603 carries the phosphothreonine; by CK1 modification. Phosphoserine is present on S605.

The protein belongs to the DNA photolyase class-1 family. In terms of assembly, homodimer. Blue-light dependent dimerization. Interacts with COP1 and PHYB in the nucleus. Binds reversibly to CIBs proteins such as BHLH63/CIB1, BHLH78/CIB2, BHLH74/CIB4 and BHLH76/CIB5 after blue light illumination to stimulate their transcription factor activities. Interacts with PIF4 and PIF5 in the nucleus in response to low blue light (LBL). Binds to SPA1 in response to blue light, this interaction prevents SPA1/COP1 complex formation but stimulates interaction with COP1, and thus avoid COP1-dependent degradation of the transcription factors CO and HY5 by the proteasome and promotes hypocotyl elongation and floral initiation. Binding to ATP mediates conformational changes which facilitate flavin binding. Interacts with BIC1 in both darkness and light. Interacts with NRP. FAD serves as cofactor. (6R)-5,10-methylene-5,6,7,8-tetrahydrofolate is required as a cofactor. Post-translationally, phosphorylated by CK1.3 and CK1.4; in response to blue light. Required for degradation. Adopts an open conformation when phosphorylated upon photoexcitation and thus interacts with signaling partner proteins. Not autophosphorylated, even in complex with FAD cofactor. In terms of processing, ubiquitinated; in response to blue light. Mostly expressed in the shoot meristems and root tips, and, to a lower extent, in the cotyledons, hypocotyls, and roots.

It is found in the nucleus. It localises to the PML body. Its subcellular location is the cytoplasm. In terms of biological role, photoreceptor that mediates primarily blue light inhibition of hypocotyl elongation and photoperiodic control of floral initiation, and regulates other light responses, including circadian rhythms, tropic growth, stomata opening, guard cell development, root development, bacterial and viral pathogen responses, abiotic stress responses, cell cycles, programmed cell death, apical dominance, fruit and ovule development, seed dormancy, and magnetoreception. Photoexcited cryptochromes interact with signaling partner proteins to alter gene expression at both transcriptional and post-translational levels and, consequently, regulate the corresponding metabolic and developmental programs. Blue-light absorbing flavoprotein that activates reversible flavin photoreduction via an electron transport chain comprising a tryptophan triad (W-321, W-374 and W-397), or via an alternative electron transport that involves small metabolites, including NADPH, NADH, and ATP. The half-life of the activated signaling state is about 16 minutes. Perceives low blue light (LBL) and responds by directly contacting two bHLH transcription factors, PIF4 and PIF5, at chromatin on E-box variant 5'-CA[CT]GTG-3' to promote their activity and stimulate specific gene expression to adapt global physiology (e.g. hypocotyl elongation and hyponastic growth in low blue light). In response to blue light, binds to CIB proteins (e.g. BHLH63/CIB1 and BHLH76/CIB5) to activate transcription and floral initiation. Mediates blue light-induced gene expression, floral initiation and hypocotyl elongation through the interaction with SPA1 that prevents formation of SPA1/COP1 complex but stimulates COP1 binding, and thus inhibits COP1-mediated degradation of transcription factors (e.g. CO and HY5). Promotes flowering time in continuous light (LL). Involved in shortening the circadian clock period, especially at 27 degrees Celsius, in blue light (BL). Required to maintain clock genes expression rhythm. Triggers nuclear accumulation of ROS in response to blue light illumination. Involved in blue light-dependent stomatal opening, transpiration and inhibition of stem and root growth, probably by regulating abscisic acid (ABA). Regulates the timing of flowering by promoting the expression of 'FLOWERING LOCUS T' (FT) in vascular bundles. Negatively regulated by 'FLOWERING LOCUS C' (FLC). General positive regulator of reversible low light-induced chromatin decompaction. Involved in triggering chromatin decondensation during floral transition. Together with phototropins, involved in phototropism regulation by various blue light fluence; blue light attenuates phototropism in high fluence rates (100 umol.m-2.s-1) but enhances phototropism in low fluence rates (&lt;1.0 umol.m-2.s-1). The effect of near-null magnetic field on flowering is altered by changes of blue light cycle and intensity in a CRY1/CRY2-dependent manner. Involved in the strigolactone signaling that regulates hypocotyl growth in response to blue light. Its function is as follows. Confers resistance to turnip crinkle virus (TCV) by preventing COP1-mediated proteasome-mediated degradation of RPP8/HRT, thus promoting its stability in light. Exposure to darkness or blue-light induces degradation of CRY2, and in turn of RPP8/HRT, resulting in susceptibility to TCV. This is Cryptochrome-2 from Arabidopsis thaliana (Mouse-ear cress).